The chain runs to 362 residues: Adenosine deaminase (362 aa).

Positions 19 and 21 each coordinate Zn(2+). The substrate site is built by His21, Asp23, and Gly181. Position 208 (His208) interacts with Zn(2+). Residue Glu211 is the Proton donor of the active site. Asp300 provides a ligand contact to Zn(2+).

Belongs to the metallo-dependent hydrolases superfamily. Adenosine and AMP deaminases family. Adenosine deaminase subfamily. The cofactor is Zn(2+).

The enzyme catalyses adenosine + H2O + H(+) = inosine + NH4(+). The catalysed reaction is 2'-deoxyadenosine + H2O + H(+) = 2'-deoxyinosine + NH4(+). Its function is as follows. Catalyzes the hydrolytic deamination of adenosine and 2-deoxyadenosine. The sequence is that of Adenosine deaminase from Mycolicibacterium gilvum (strain PYR-GCK) (Mycobacterium gilvum (strain PYR-GCK)).